A 98-amino-acid chain; its full sequence is Large ribosomal subunit protein bL25 (98 aa).

The interval 1 to 22 (MANFVLNATARNEDKQGKGASR) is disordered.

Belongs to the bacterial ribosomal protein bL25 family. Part of the 50S ribosomal subunit; part of the 5S rRNA/L5/L18/L25 subcomplex. Contacts the 5S rRNA. Binds to the 5S rRNA independently of L5 and L18.

This is one of the proteins that binds to the 5S RNA in the ribosome where it forms part of the central protuberance. This chain is Large ribosomal subunit protein bL25, found in Acinetobacter baylyi (strain ATCC 33305 / BD413 / ADP1).